We begin with the raw amino-acid sequence, 293 residues long: Ribosomal protein L11 methyltransferase (293 aa).

S-adenosyl-L-methionine contacts are provided by T145, G166, D188, and N230.

It belongs to the methyltransferase superfamily. PrmA family.

It is found in the cytoplasm. The catalysed reaction is L-lysyl-[protein] + 3 S-adenosyl-L-methionine = N(6),N(6),N(6)-trimethyl-L-lysyl-[protein] + 3 S-adenosyl-L-homocysteine + 3 H(+). Its function is as follows. Methylates ribosomal protein L11. The polypeptide is Ribosomal protein L11 methyltransferase (Pasteurella multocida (strain Pm70)).